A 255-amino-acid chain; its full sequence is Hydroxyacylglutathione hydrolase (255 aa).

Zn(2+)-binding residues include histidine 59, histidine 61, aspartate 63, histidine 64, histidine 118, aspartate 144, and histidine 182.

It belongs to the metallo-beta-lactamase superfamily. Glyoxalase II family. Monomer. Zn(2+) serves as cofactor.

The catalysed reaction is an S-(2-hydroxyacyl)glutathione + H2O = a 2-hydroxy carboxylate + glutathione + H(+). It participates in secondary metabolite metabolism; methylglyoxal degradation; (R)-lactate from methylglyoxal: step 2/2. In terms of biological role, thiolesterase that catalyzes the hydrolysis of S-D-lactoyl-glutathione to form glutathione and D-lactic acid. The protein is Hydroxyacylglutathione hydrolase of Synechococcus sp. (strain WH7803).